The chain runs to 212 residues: MDIGSIRHDFTEHPPLLEQDLAADPIEQFAAWFQYAVDSGISEPNGFVLATVAADGQPSQRSVLLKLFDEEGFVFYTNYSSQKAEEIEKNAQVSMSFPWYALQRQIHVYGRAEKIPREQSLAYFLTRPQGSQIGAWASPQSKIIESRDFLMLKWQNMKAKFHEGKIPLPDFWGGYRVRPHKIEFWQGQPSRLHDRFLYEKTENGWTVSRRAP.

Residues 61–66 (RSVLLK), 76–77 (YT), K83, and Q105 each bind FMN. Residue K66 participates in substrate binding. Substrate-binding residues include Y123, R127, and S131. Residues 140-141 (QS) and W185 each bind FMN. Position 191 to 193 (191 to 193 (RLH)) interacts with substrate. Residue R195 participates in FMN binding.

It belongs to the pyridoxamine 5'-phosphate oxidase family. As to quaternary structure, homodimer. The cofactor is FMN.

The catalysed reaction is pyridoxamine 5'-phosphate + O2 + H2O = pyridoxal 5'-phosphate + H2O2 + NH4(+). It carries out the reaction pyridoxine 5'-phosphate + O2 = pyridoxal 5'-phosphate + H2O2. It functions in the pathway cofactor metabolism; pyridoxal 5'-phosphate salvage; pyridoxal 5'-phosphate from pyridoxamine 5'-phosphate: step 1/1. Its pathway is cofactor metabolism; pyridoxal 5'-phosphate salvage; pyridoxal 5'-phosphate from pyridoxine 5'-phosphate: step 1/1. In terms of biological role, catalyzes the oxidation of either pyridoxine 5'-phosphate (PNP) or pyridoxamine 5'-phosphate (PMP) into pyridoxal 5'-phosphate (PLP). The protein is Pyridoxine/pyridoxamine 5'-phosphate oxidase of Dichelobacter nodosus (strain VCS1703A).